Here is a 498-residue protein sequence, read N- to C-terminus: Protein adenylyltransferase Fic (498 aa).

Residues 43–63 form a helical membrane-spanning segment; it reads FAFLAFLAGSFLAFSLHALIS. 2 TPR repeats span residues 126–159 and 160–194; these read ALSSLRLAQDMYMAGKDDKAARLFEHALALAPRH and PEVLLRYGEFLEHNQRNIVLADQYYFQALTINPSH. Positions 251–256 match the Inhibitory (S/T)XXXE(G/N) motif motif; sequence SVGIEG. Residues glutamate 255 and 336–339 each bind ATP; that span reads VGGH. Residues 305–440 form the Fido domain; it reads ITIKDILELH…IRPFVRFIAD (136 aa). Residue histidine 383 is part of the active site. Residues 387-394, 419-420, and asparagine 427 each bind ATP; these read DGNGRTSR and YY.

This sequence belongs to the fic family. In terms of assembly, homodimer.

The protein localises to the membrane. It carries out the reaction L-tyrosyl-[protein] + ATP = O-(5'-adenylyl)-L-tyrosyl-[protein] + diphosphate. It catalyses the reaction L-threonyl-[protein] + ATP = 3-O-(5'-adenylyl)-L-threonyl-[protein] + diphosphate. The enzyme catalyses 3-O-(5'-adenylyl)-L-threonyl-[protein] + H2O = L-threonyl-[protein] + AMP + H(+). The side chain of Glu-255 determines which of the two opposing activities (AMPylase or de-AMPylase) will take place. In response to endoplasmic reticulum stress, mediates de-AMPylase activity. Adenylyltransferase activity is inhibited by the inhibitory helix present at the N-terminus: Glu-255 binds ATP and competes with ATP-binding at Arg-394, thereby preventing adenylyltransferase activity. In unstressed cells, disengagement of Glu-255 promotes adenylyltransferase activity. Activation dissociates ATP-binding from Glu-255, allowing ordered binding of the entire ATP moiety with the alpha-phosphate in an orientation that is productive for accepting an incoming target hydroxyl side chain. Functionally, protein that can both mediate the addition of adenosine 5'-monophosphate (AMP) to specific residues of target proteins (AMPylation), and the removal of the same modification from target proteins (de-AMPylation), depending on the context. The side chain of Glu-255 determines which of the two opposing activities (AMPylase or de-AMPylase) will take place. Acts as a key regulator of the unfolded protein response (UPR) by mediating AMPylation or de-AMPylation of Hsc70-3/BiP. In unstressed cells, acts as an adenylyltransferase by mediating AMPylation of Hsc70-3/BiP at 'Thr-518', thereby inactivating it. In response to endoplasmic reticulum stress, acts as a phosphodiesterase by mediating removal of ATP (de-AMPylation) from Hsc70-3/BiP at 'Thr-518', leading to restore HSPA5/BiP activity. The chain is Protein adenylyltransferase Fic from Drosophila willistoni (Fruit fly).